A 174-amino-acid chain; its full sequence is Peptide deformylase (174 aa).

Positions 98 and 140 each coordinate Fe cation. Glu141 is an active-site residue. Residue His144 participates in Fe cation binding.

It belongs to the polypeptide deformylase family. Requires Fe(2+) as cofactor.

It catalyses the reaction N-terminal N-formyl-L-methionyl-[peptide] + H2O = N-terminal L-methionyl-[peptide] + formate. In terms of biological role, removes the formyl group from the N-terminal Met of newly synthesized proteins. Requires at least a dipeptide for an efficient rate of reaction. N-terminal L-methionine is a prerequisite for activity but the enzyme has broad specificity at other positions. The chain is Peptide deformylase from Bradyrhizobium diazoefficiens (strain JCM 10833 / BCRC 13528 / IAM 13628 / NBRC 14792 / USDA 110).